The following is a 282-amino-acid chain: Orotidine 5'-phosphate decarboxylase (282 aa).

Catalysis depends on K95, which acts as the Proton donor.

Belongs to the OMP decarboxylase family. Type 2 subfamily.

It catalyses the reaction orotidine 5'-phosphate + H(+) = UMP + CO2. It participates in pyrimidine metabolism; UMP biosynthesis via de novo pathway; UMP from orotate: step 2/2. The chain is Orotidine 5'-phosphate decarboxylase (pyrF) from Mycobacterium leprae (strain TN).